Here is a 134-residue protein sequence, read N- to C-terminus: Translation initiation factor 2 subunit beta (134 aa).

Residues 1-12 (MEYDDMLDRAME) show a composition bias toward basic and acidic residues. The interval 1 to 28 (MEYDDMLDRAMEETPEIDGTSERFEVPD) is disordered.

The protein belongs to the eIF-2-beta/eIF-5 family. In terms of assembly, heterotrimer composed of an alpha, a beta and a gamma chain.

In terms of biological role, eIF-2 functions in the early steps of protein synthesis by forming a ternary complex with GTP and initiator tRNA. In Haloarcula marismortui (strain ATCC 43049 / DSM 3752 / JCM 8966 / VKM B-1809) (Halobacterium marismortui), this protein is Translation initiation factor 2 subunit beta.